A 318-amino-acid polypeptide reads, in one-letter code: NADH-ubiquinone oxidoreductase chain 1 (318 aa).

A run of 8 helical transmembrane segments spans residues 2 to 22 (FMIN…FLTL), 70 to 90 (MFII…IPLP), 100 to 120 (LGIL…LWSG), 147 to 167 (AIIL…TLII), 171 to 191 (YLWL…STLA), 217 to 237 (AGPF…MNIF), 254 to 276 (LYSI…IRAS), and 294 to 314 (LPLT…LSSI).

It belongs to the complex I subunit 1 family. Core subunit of respiratory chain NADH dehydrogenase (Complex I) which is composed of 45 different subunits.

The protein localises to the mitochondrion inner membrane. It catalyses the reaction a ubiquinone + NADH + 5 H(+)(in) = a ubiquinol + NAD(+) + 4 H(+)(out). Its function is as follows. Core subunit of the mitochondrial membrane respiratory chain NADH dehydrogenase (Complex I) which catalyzes electron transfer from NADH through the respiratory chain, using ubiquinone as an electron acceptor. Essential for the catalytic activity and assembly of complex I. This chain is NADH-ubiquinone oxidoreductase chain 1 (MT-ND1), found in Equus asinus (Donkey).